Consider the following 158-residue polypeptide: Osmosensory protein A (158 aa).

Residue Thr2 is modified to Phosphothreonine; by PknD. In terms of domain architecture, STAS spans Ala28–Leu139.

Belongs to the anti-sigma-factor antagonist family. As to quaternary structure, interacts with Rv2638. Phosphorylation abolishes binding to Rv2638. In terms of processing, phosphorylated on Thr-2 by the serine/threonine-protein kinase PknD. Also phosphorylated to a lesser extent by PknB and PknE. Dephosphorylated by PstP.

Its activity is regulated as follows. Regulated by PknD under osmotic stress. Its function is as follows. Part of a signaling pathway that enables adaptation to osmotic stress through cell wall remodeling and virulence factor production. Unphosphorylated OprA forms a complex with the anti-anti-sigma-factor paralog Rv2638 that dissociates on OprA phosphorylation by PknD. Phosphorylation of OprA may stimulate the release of SigF from an inhibitory complex and enable the transcription of osmotically regulated genes, such as oprA and the ESX-1-associated virulence factor espA. The polypeptide is Osmosensory protein A (Mycobacterium tuberculosis (strain ATCC 25618 / H37Rv)).